The primary structure comprises 40 residues: uncharacterized protein (40 aa).

The chain crosses the membrane as a helical span at residues 20 to 37 (TYLYWTAVTAAYLTYLTI).

It is found in the membrane. This is an uncharacterized protein from Archaeoglobus fulgidus (strain ATCC 49558 / DSM 4304 / JCM 9628 / NBRC 100126 / VC-16).